Here is a 380-residue protein sequence, read N- to C-terminus: Rab9 effector protein with kelch motifs (380 aa).

6 Kelch repeats span residues 57–103, 108–154, 159–211, 212–258, 262–311, and 357–380; these read KIFI…FLPS, SIWV…TSSA, QLYV…AAGT, KLFI…AAVA, HVYM…VIPW, and LCFV…TVVD.

Interacts with PIKFYVE; the interaction recruits RABEPK to the endosomal membrane. Interacts with RAB9 in its GTP-bound conformation. Phosphorylated on Ser residues by PIKFYVE.

The protein localises to the cytoplasm. Its subcellular location is the endosome membrane. Rab9 effector required for endosome to trans-Golgi network (TGN) transport. This is Rab9 effector protein with kelch motifs from Mus musculus (Mouse).